Consider the following 199-residue polypeptide: MQDKLVWIDCEMTGLRLGTDKLIEIAALVTDSELNVLGEGVDIVIHADDDALAAMPDVVTKMHENSGLTDEVRKSTVTLAEAEQQVLAYIREHVPVAGTAPLAGNSIATDRGFIARDMPDLDTYLHYRMIDVSSIKELSRRWYPRIYFGQPEKGLAHRALADIRESIRELKYYRKTAFVPEPGPSTSDIAAVVEELGPA.

An Exonuclease domain is found at 5–170 (LVWIDCEMTG…ADIRESIREL (166 aa)). Residue Tyr127 is part of the active site.

The protein belongs to the oligoribonuclease family.

The protein resides in the cytoplasm. In terms of biological role, 3'-to-5' exoribonuclease specific for small oligoribonucleotides. The polypeptide is Oligoribonuclease (Rhodococcus jostii (strain RHA1)).